A 173-amino-acid chain; its full sequence is Ferritin-1 heavy chain (173 aa).

In terms of domain architecture, Ferritin-like diiron spans 6 to 155 (QNYHEECEAG…DYITNLIRVG (150 aa)). E23, E58, H61, E103, and Q137 together coordinate Fe cation.

The protein belongs to the ferritin family. In terms of assembly, oligomer of 24 subunits. The functional molecule forms a roughly spherical shell with a diameter of 12 nm and contains a central cavity into which the insoluble mineral iron core is deposited.

It catalyses the reaction 4 Fe(2+) + O2 + 4 H(+) = 4 Fe(3+) + 2 H2O. Its function is as follows. Stores iron in a soluble, non-toxic, readily available form. Important for iron homeostasis. Has ferroxidase activity. Iron is taken up in the ferrous form and deposited as ferric hydroxides after oxidation. The protein is Ferritin-1 heavy chain (SCM-1) of Schistosoma mansoni (Blood fluke).